The chain runs to 277 residues: Putative thiosulfate sulfurtransferase mpst-4 (277 aa).

2 consecutive Rhodanese domains span residues 15–153 and 155–243; these read NFGN…VVQS and SKAE…QHLN. Cys-204 serves as the catalytic Cysteine persulfide intermediate.

The enzyme catalyses thiosulfate + hydrogen cyanide = thiocyanate + sulfite + 2 H(+). The protein is Putative thiosulfate sulfurtransferase mpst-4 of Caenorhabditis elegans.